A 606-amino-acid polypeptide reads, in one-letter code: Limonene synthase, chloroplastic (606 aa).

A chloroplast-targeting transit peptide spans 1-38; it reads MAIINLPVPTNSSSEVNKHNHLRSCLPSGRATFTTLSA. Residues arginine 320, aspartate 357, aspartate 361, arginine 497, and aspartate 500 each coordinate (2E)-geranyl diphosphate. Residues aspartate 357 and aspartate 361 each contribute to the Mg(2+) site. A DDXXD motif motif is present at residues 357–361; the sequence is DDIYD. The Mg(2+) site is built by aspartate 500, threonine 504, and glutamate 508.

This sequence belongs to the terpene synthase family. Tpsb subfamily. Monomer. It depends on Mg(2+) as a cofactor. The cofactor is Mn(2+). Confined to fruits.

It is found in the plastid. Its subcellular location is the chloroplast. It carries out the reaction (2E,6E)-farnesyl diphosphate = (E)-beta-farnesene + diphosphate. The enzyme catalyses (2E)-geranyl diphosphate = limonene + diphosphate. The catalysed reaction is (2E)-geranyl diphosphate = beta-pinene + diphosphate. It catalyses the reaction (2E)-geranyl diphosphate = sabinene + diphosphate. It carries out the reaction (2E)-geranyl diphosphate = beta-myrcene + diphosphate. The enzyme catalyses (2E)-geranyl diphosphate = alpha-pinene + diphosphate. The catalysed reaction is (2E)-geranyl diphosphate = terpinolene + diphosphate. It participates in secondary metabolite biosynthesis; terpenoid biosynthesis. In terms of biological role, monoterpene synthase (mono-TPS) involved in the biosynthesis of monoterpenes natural products, constituent of coffee beverage aroma. Catalyzes the conversion of (2E)-geranyl diphosphate (GPP) into limonene, beta-pinene, sabinene and beta-myrcene, and, as minor products, alpha-pinene and alpha-terpinolene. Can also, with a low efficiency, use farnesyl pyrophosphate (FPP) as substrate to produce beta-farnesene. Not able to use geranylgeranyl pyrophosphate (GGPP) as substrate. The protein is Limonene synthase, chloroplastic of Coffea arabica (Arabian coffee).